The chain runs to 292 residues: uncharacterized protein (292 aa).

Positions 1-213 (MTTAITPDKK…DQDDDDQKDL (213 aa)) are disordered. 2 stretches are compositionally biased toward basic residues: residues 27 to 43 (TKPR…KSKK) and 50 to 78 (AKKR…KKAP). Positions 90–100 (QQAQASLQKPI) are enriched in polar residues. The span at 116-134 (PRPPTPIPPTGVKPEPAPR) shows a compositional bias: pro residues. Over residues 143–158 (SVSSTTPRTSATTGTT) the composition is skewed to low complexity.

This is an uncharacterized protein from Caenorhabditis elegans.